We begin with the raw amino-acid sequence, 230 residues long: UPF0173 metal-dependent hydrolase RSKD131_0588 (230 aa).

It belongs to the UPF0173 family.

This Cereibacter sphaeroides (strain KD131 / KCTC 12085) (Rhodobacter sphaeroides) protein is UPF0173 metal-dependent hydrolase RSKD131_0588.